Consider the following 3912-residue polypeptide: Ubiquitin carboxyl-terminal hydrolase puf (3912 aa).

5 disordered regions span residues 101-172, 518-590, 660-688, 851-878, and 1491-1611; these read AQQQ…HKSH, NVTA…ISPE, DVPS…ECSD, VVSG…VQPS, and SRRG…PALS. Residues 106–133 are compositionally biased toward basic and acidic residues; it reads EQQRDEASAQAEAKESSAPAEEPKKEEP. A compositionally biased stretch (low complexity) spans 134–143; sequence SGSAGEEAQG. Residues 150 to 164 are compositionally biased toward pro residues; sequence KKPPVGPCTPPPPQT. A compositionally biased stretch (low complexity) spans 522–532; that stretch reads SSSDSGSIEGS. The span at 576–585 shows a compositional bias: basic and acidic residues; the sequence is ICDPTTEKGK. The span at 660-687 shows a compositional bias: acidic residues; sequence DVPSSDEADGEADGDGEGELLADSDECS. Positions 862–876 are enriched in polar residues; the sequence is KASQGSSTSGSTPVQ. A compositionally biased stretch (basic residues) spans 1511 to 1520; it reads VKKSSMGRRR. The span at 1550–1567 shows a compositional bias: polar residues; that stretch reads TPSTGLQDVETEASSSSG. Residues 1583–1594 are compositionally biased toward basic and acidic residues; the sequence is KGETFEQEKERP. Residues 1600 to 1609 show a composition bias toward pro residues; it reads PPSPTPPPPA. A USP domain is found at 2015–2380; that stretch reads VGLTNLGATC…SAYMLFYERR (366 aa). The active-site Nucleophile is the Cys2024. A compositionally biased stretch (basic and acidic residues) spans 2249–2263; the sequence is YKEERERRQKEKEGA. Residues 2249–2274 are disordered; that stretch reads YKEERERRQKEKEGADGSGDGNDNEK. Residue His2305 is the Proton acceptor of the active site. 4 disordered regions span residues 2391–2529, 3322–3344, 3657–3776, and 3800–3912; these read ELLV…TSKA, QQSQ…LQQQ, SERF…EERE, and ASVP…PTQI. Composition is skewed to basic and acidic residues over residues 2402–2413 and 2433–2488; these read VEEKSEAEEPTK and EKDK…EKPT. Positions 2504-2523 are enriched in low complexity; that stretch reads NCDNHQQNNNSNSKASNDQQ. Over residues 3657–3703 the composition is skewed to basic and acidic residues; the sequence is SERFRKESERDPFPNKKQKRDSQKIKEKEHPQPESEKETSTENDKPS. Residues 3706-3721 are compositionally biased toward polar residues; sequence SMESSGNAEQATDSTK. Positions 3741 to 3751 are enriched in acidic residues; sequence SDDETELEDEL. Residues 3766 to 3776 are compositionally biased toward basic and acidic residues; it reads TAQDRVNEERE. Positions 3865 to 3877 are enriched in polar residues; that stretch reads PKTSQTNGSQQNE. The segment covering 3878–3912 has biased composition (low complexity); it reads SPPAATSADTAPANPSPAPAAAVASTSQAASPTQI.

Belongs to the peptidase C19 family. Interacts with Myc and ago.

It is found in the nucleus. It carries out the reaction Thiol-dependent hydrolysis of ester, thioester, amide, peptide and isopeptide bonds formed by the C-terminal Gly of ubiquitin (a 76-residue protein attached to proteins as an intracellular targeting signal).. Functionally, ubiquitin hydrolase that can remove conjugated ubiquitin from target proteins and polyubiquitin chains. Essential for Myc-mediated cell growth and proliferation in developing eyes and wings. In the wing and eye, the deubiquitinating activity acts as an antagonist to the SCF E3 ubiquitin-protein ligase member archipelago (ago) to regulate Myc and CycE stability and thus control cell growth and proliferation. Also appears to regulate ago by modulating its induction by Myc. May also promote cell apoptosis in the wing imaginal disk, acting in an apoptotic pathway that appears to be largely independent of Myc. Required for preventing the activation of the immune deficiency (Imd) and Toll signaling cascades under unchallenged conditions. Also appears to be involved in modulating the differential expression of certain antimicrobial peptides (AMP) in response to infection by either Gram-positive or Gram-negative bacteria. Involved in the regulation of DNA damage repair pathways, including euchromatic site-specific double strand break (DSB) repair. The sequence is that of Ubiquitin carboxyl-terminal hydrolase puf from Drosophila melanogaster (Fruit fly).